The following is a 447-amino-acid chain: Na(+)-translocating NADH-quinone reductase subunit A (447 aa).

Belongs to the NqrA family. As to quaternary structure, composed of six subunits; NqrA, NqrB, NqrC, NqrD, NqrE and NqrF.

It catalyses the reaction a ubiquinone + n Na(+)(in) + NADH + H(+) = a ubiquinol + n Na(+)(out) + NAD(+). Its function is as follows. NQR complex catalyzes the reduction of ubiquinone-1 to ubiquinol by two successive reactions, coupled with the transport of Na(+) ions from the cytoplasm to the periplasm. NqrA to NqrE are probably involved in the second step, the conversion of ubisemiquinone to ubiquinol. This is Na(+)-translocating NADH-quinone reductase subunit A from Klebsiella pneumoniae subsp. pneumoniae (strain ATCC 700721 / MGH 78578).